Consider the following 132-residue polypeptide: MDVTRLLLATLLVFLCFFTANSHLPPEEKLRDDRSLRSNSSVNLLDVPSVSIVALNKKSKQIGRKAAEKKRSSKKEASMKKVVRPRTPLSAPCVATRNSCKPPAPACCDPCASCQCRFFRSACSCRVLSLNC.

The N-terminal stretch at 1 to 22 (MDVTRLLLATLLVFLCFFTANS) is a signal peptide. A glycan (N-linked (GlcNAc...) asparagine) is linked at Asn-39. The disordered stretch occupies residues 62–85 (IGRKAAEKKRSSKKEASMKKVVRP). Over residues 65 to 79 (KAAEKKRSSKKEASM) the composition is skewed to basic and acidic residues. 5 cysteine pairs are disulfide-bonded: Cys-93–Cys-108, Cys-100–Cys-114, Cys-107–Cys-125, Cys-111–Cys-132, and Cys-116–Cys-123. The Agouti domain occupies 93 to 132 (CVATRNSCKPPAPACCDPCASCQCRFFRSACSCRVLSLNC).

As to expression, widely expressed at low levels. Highly expressed in the skin. Expressed in adipose tissue.

It is found in the secreted. In terms of biological role, involved in the regulation of melanogenesis. The binding of ASP to MC1R precludes alpha-MSH initiated signaling and thus blocks production of cAMP, leading to a down-regulation of eumelanogenesis (brown/black pigment) and thus increasing synthesis of pheomelanin (yellow/red pigment). In higher primates, agouti may affect the quality of hair pigmentation rather than its pattern of deposition. Could well play a role in neuroendocrine aspects of melanocortin action. May have some functional role in regulating the lipid metabolism with adipocytes. The protein is Agouti-signaling protein (ASIP) of Homo sapiens (Human).